The sequence spans 195 residues: Putative deoxynucleoside kinase (195 aa).

The chain is Putative deoxynucleoside kinase from Frog virus 3 (isolate Goorha) (FV-3).